Consider the following 152-residue polypeptide: Transcriptional repressor NrdR (152 aa).

Residues 3-34 fold into a zinc finger; the sequence is CPFCNHGELKVIDSRNAPEANAIKRRRECLKC. In terms of domain architecture, ATP-cone spans 48 to 138; it reads LQVLKRDGRY…VYRRFKDVGE (91 aa).

This sequence belongs to the NrdR family. Zn(2+) serves as cofactor.

Its function is as follows. Negatively regulates transcription of bacterial ribonucleotide reductase nrd genes and operons by binding to NrdR-boxes. The sequence is that of Transcriptional repressor NrdR from Chlamydia pneumoniae (Chlamydophila pneumoniae).